The sequence spans 401 residues: UPF0283 membrane protein SO_1811 (401 aa).

A disordered region spans residues 1-22; that stretch reads MSVELLPHSTEPHANGADKSVS. The next 3 membrane-spanning stretches (helical) occupy residues 99–119, 129–149, and 239–259; these read LARL…VLGL, LFSF…VGVI, and ESAV…IILW.

This sequence belongs to the UPF0283 family.

It localises to the cell inner membrane. In Shewanella oneidensis (strain ATCC 700550 / JCM 31522 / CIP 106686 / LMG 19005 / NCIMB 14063 / MR-1), this protein is UPF0283 membrane protein SO_1811.